The sequence spans 210 residues: Uridine kinase (210 aa).

12–19 serves as a coordination point for ATP; it reads GGSGGGKT.

It belongs to the uridine kinase family.

The protein resides in the cytoplasm. It catalyses the reaction uridine + ATP = UMP + ADP + H(+). The enzyme catalyses cytidine + ATP = CMP + ADP + H(+). The protein operates within pyrimidine metabolism; CTP biosynthesis via salvage pathway; CTP from cytidine: step 1/3. It participates in pyrimidine metabolism; UMP biosynthesis via salvage pathway; UMP from uridine: step 1/1. In Streptococcus gordonii (strain Challis / ATCC 35105 / BCRC 15272 / CH1 / DL1 / V288), this protein is Uridine kinase.